A 173-amino-acid polypeptide reads, in one-letter code: MARVEL domain-containing protein 1 (173 aa).

M1 carries the N-acetylmethionine modification. Residues 1–29 are Cytoplasmic-facing; that stretch reads MLPPPPRQPPPQARAARGAVRLQRPFLRS. The MARVEL domain maps to 26–166; that stretch reads FLRSPLGVLR…SALYGCGRRC (141 aa). Residues 30–50 form a helical membrane-spanning segment; that stretch reads PLGVLRLLQLLAGAAFWITIA. Topologically, residues 51 to 59 are extracellular; that stretch reads TSKYQGPVH. Residues 60–80 traverse the membrane as a helical segment; it reads FALFVSVLFWLLTLGLYFLTL. Over 81–94 the chain is Cytoplasmic; sequence LGKHELVPVLGSRW. A helical transmembrane segment spans residues 95–115; it reads LMVNVAHDVLAAALYGAATGI. Over 116–138 the chain is Extracellular; sequence MSDQMQRHSYCNLKDYPLPCAYH. The chain crosses the membrane as a helical span at residues 139–159; the sequence is AFLAAAVCGGVCHGLYLLSAL. Over 160–173 the chain is Cytoplasmic; it reads YGCGRRCQGKQEVA.

As to expression, widely expressed in normal tissues. Down-regulated in multiple primary tumors.

The protein localises to the cell membrane. The protein resides in the cytoplasm. It is found in the cytoskeleton. Its subcellular location is the nucleus. In terms of biological role, microtubule-associated protein that exhibits cell cycle-dependent localization and can inhibit cell proliferation and migration. The polypeptide is MARVEL domain-containing protein 1 (MARVELD1) (Homo sapiens (Human)).